A 283-amino-acid polypeptide reads, in one-letter code: Diaminopimelate epimerase (283 aa).

Asparagine 13, glutamine 45, and asparagine 65 together coordinate substrate. Cysteine 74 serves as the catalytic Proton donor. Substrate is bound by residues 75 to 76 (GN), asparagine 156, asparagine 190, and 208 to 209 (ER). Cysteine 217 serves as the catalytic Proton acceptor. A substrate-binding site is contributed by 218 to 219 (GS).

The protein belongs to the diaminopimelate epimerase family. Homodimer.

The protein localises to the cytoplasm. It carries out the reaction (2S,6S)-2,6-diaminopimelate = meso-2,6-diaminopimelate. It participates in amino-acid biosynthesis; L-lysine biosynthesis via DAP pathway; DL-2,6-diaminopimelate from LL-2,6-diaminopimelate: step 1/1. Functionally, catalyzes the stereoinversion of LL-2,6-diaminopimelate (L,L-DAP) to meso-diaminopimelate (meso-DAP), a precursor of L-lysine and an essential component of the bacterial peptidoglycan. The sequence is that of Diaminopimelate epimerase from Bartonella henselae (strain ATCC 49882 / DSM 28221 / CCUG 30454 / Houston 1) (Rochalimaea henselae).